The following is an 82-amino-acid chain: MDSITTAASVVAAGLAVGLGAIGPGIGQGSAAQGAVEGIARQPEAEGKIRGTLLLSFAFMESLTIYGLVVALVLLFANPFAG.

2 consecutive transmembrane segments (helical) span residues 7–27 and 57–77; these read AASV…PGIG and FAFM…LLFA.

This sequence belongs to the ATPase C chain family. F-type ATPases have 2 components, F(1) - the catalytic core - and F(0) - the membrane proton channel. F(1) has five subunits: alpha(3), beta(3), gamma(1), delta(1), epsilon(1). F(0) has four main subunits: a(1), b(1), b'(1) and c(10-14). The alpha and beta chains form an alternating ring which encloses part of the gamma chain. F(1) is attached to F(0) by a central stalk formed by the gamma and epsilon chains, while a peripheral stalk is formed by the delta, b and b' chains.

Its subcellular location is the cellular thylakoid membrane. Its function is as follows. F(1)F(0) ATP synthase produces ATP from ADP in the presence of a proton or sodium gradient. F-type ATPases consist of two structural domains, F(1) containing the extramembraneous catalytic core and F(0) containing the membrane proton channel, linked together by a central stalk and a peripheral stalk. During catalysis, ATP synthesis in the catalytic domain of F(1) is coupled via a rotary mechanism of the central stalk subunits to proton translocation. In terms of biological role, key component of the F(0) channel; it plays a direct role in translocation across the membrane. A homomeric c-ring of between 10-14 subunits forms the central stalk rotor element with the F(1) delta and epsilon subunits. The chain is ATP synthase subunit c from Prochlorococcus marinus (strain NATL1A).